Reading from the N-terminus, the 397-residue chain is MNIHEYQGKALLKSFGAPVAEGVPVFKASEAEAAARALPGPLYVVKSQIHAGGRGKGKFKELSPDAKGGVRLAKSVADVVANANEMLGHTLVTKQTGPAGKQVNRLYIEDGADIERELYLSILVDRSVGRIAFVVSTEGGMDIEAVAHDTPEKVITVAIDPERGVTADDVKKLNAALKLDGDAAKDGGTLFPILYKAFIEKDMSLLEVNPLIVMKNGRLRVLDAKVSFDNNALFRHPDVLELRDTTEEDEKEIEASKYDLAYVALDGNIGCMVNGAGLAMATMDIIKLYGAEPANFLDVGGGASKEKVTAAFKIITKDPAVKGILINIFGGIMKCDIIAEGVIAAVKEVGLEVPLVVRLEGTNAELGKKIINDSGLNVVSADDLDDAAKKIVAAVKG.

Residues 9–254 (KALLKSFGAP…TTEEDEKEIE (246 aa)) form the ATP-grasp domain. ATP is bound by residues lysine 46, 53–55 (GRG), glutamate 109, alanine 112, and glutamate 117. The Mg(2+) site is built by asparagine 209 and aspartate 223. Substrate contacts are provided by residues asparagine 274 and 331 to 333 (GIM).

The protein belongs to the succinate/malate CoA ligase beta subunit family. Heterotetramer of two alpha and two beta subunits. Requires Mg(2+) as cofactor.

It catalyses the reaction succinate + ATP + CoA = succinyl-CoA + ADP + phosphate. The catalysed reaction is GTP + succinate + CoA = succinyl-CoA + GDP + phosphate. It participates in carbohydrate metabolism; tricarboxylic acid cycle; succinate from succinyl-CoA (ligase route): step 1/1. Its function is as follows. Succinyl-CoA synthetase functions in the citric acid cycle (TCA), coupling the hydrolysis of succinyl-CoA to the synthesis of either ATP or GTP and thus represents the only step of substrate-level phosphorylation in the TCA. The beta subunit provides nucleotide specificity of the enzyme and binds the substrate succinate, while the binding sites for coenzyme A and phosphate are found in the alpha subunit. This Mesorhizobium japonicum (strain LMG 29417 / CECT 9101 / MAFF 303099) (Mesorhizobium loti (strain MAFF 303099)) protein is Succinate--CoA ligase [ADP-forming] subunit beta.